Reading from the N-terminus, the 143-residue chain is 3-hydroxyacyl-[acyl-carrier-protein] dehydratase FabZ (143 aa).

His49 is a catalytic residue.

Belongs to the thioester dehydratase family. FabZ subfamily.

The protein resides in the cytoplasm. It catalyses the reaction a (3R)-hydroxyacyl-[ACP] = a (2E)-enoyl-[ACP] + H2O. In terms of biological role, involved in unsaturated fatty acids biosynthesis. Catalyzes the dehydration of short chain beta-hydroxyacyl-ACPs and long chain saturated and unsaturated beta-hydroxyacyl-ACPs. The protein is 3-hydroxyacyl-[acyl-carrier-protein] dehydratase FabZ of Wolbachia pipientis subsp. Culex pipiens (strain wPip).